A 350-amino-acid chain; its full sequence is MKVKAPGRINIIGEHTDYNDGYVLPFAVNRYVFLSIEGSERFIFHSENVNETVEMEKIEKLNKWTDYISGVIASFEKRGYRVSPVKISVSSNLPIGAGLSSSAALEVATAYAISEYFGFNVPKLELVKIAREAEVEFVGVRCGIMDQFTAVFGKKDHAIFLDTMTLEYEYVPLKLEGYEINLVDSNVKHELSSSEYNRRRQECEEVLKTLEKKSFREVTKEDLERLSGTLRKRAQHVLEENERVLKSVQALKEGDFETLGKLLFSSHESLRDLYEVSCEETDFIVDYLRGKEGILGARMVGGGFGGGVIVLSKKGAFGKIKEELVESYRKRFGIDLIFHEIESSDGVQKI.

14-17 (EHTD) is a substrate binding site. Residues Ser-46 and 96 to 102 (GAGLSSS) each bind ATP. Mg(2+)-binding residues include Ser-102 and Glu-134. Catalysis depends on Asp-146, which acts as the Proton acceptor. Tyr-196 serves as a coordination point for substrate.

It belongs to the GHMP kinase family. GalK subfamily.

It localises to the cytoplasm. It carries out the reaction alpha-D-galactose + ATP = alpha-D-galactose 1-phosphate + ADP + H(+). It functions in the pathway carbohydrate metabolism; galactose metabolism. Catalyzes the transfer of the gamma-phosphate of ATP to D-galactose to form alpha-D-galactose-1-phosphate (Gal-1-P). In Thermotoga maritima (strain ATCC 43589 / DSM 3109 / JCM 10099 / NBRC 100826 / MSB8), this protein is Galactokinase.